The chain runs to 303 residues: tRNA dimethylallyltransferase (303 aa).

16-23 (GPTASGKS) is a binding site for ATP. 18-23 (TASGKS) lines the substrate pocket. The interaction with substrate tRNA stretch occupies residues 41–44 (DSMQ). Residues 141-161 (AEALHGELSARDPETAGRVRP) form a disordered region. The interval 165 to 169 (QRIVR) is interaction with substrate tRNA.

It belongs to the IPP transferase family. As to quaternary structure, monomer. Mg(2+) serves as cofactor.

The enzyme catalyses adenosine(37) in tRNA + dimethylallyl diphosphate = N(6)-dimethylallyladenosine(37) in tRNA + diphosphate. Functionally, catalyzes the transfer of a dimethylallyl group onto the adenine at position 37 in tRNAs that read codons beginning with uridine, leading to the formation of N6-(dimethylallyl)adenosine (i(6)A). This chain is tRNA dimethylallyltransferase, found in Rhizobium meliloti (strain 1021) (Ensifer meliloti).